Consider the following 187-residue polypeptide: Ras-like protein rasD (187 aa).

Residue 10–17 (GGGGVGKS) coordinates GTP. The Effector region motif lies at 32 to 40 (YDPTIEDSY). Residues 57 to 61 (DTAGQ) and 116 to 119 (NKAD) each bind GTP. At cysteine 184 the chain carries Cysteine methyl ester. The S-geranylgeranyl cysteine moiety is linked to residue cysteine 184. Positions 185-187 (LIL) are cleaved as a propeptide — removed in mature form.

This sequence belongs to the small GTPase superfamily. Ras family.

It is found in the cell membrane. The enzyme catalyses GTP + H2O = GDP + phosphate + H(+). Its activity is regulated as follows. Alternates between an inactive form bound to GDP and an active form bound to GTP. Activated by a guanine nucleotide-exchange factor (GEF) and inactivated by a GTPase-activating protein (GAP). Functionally, ras proteins bind GDP/GTP and possess intrinsic GTPase activity. The chain is Ras-like protein rasD (rasD) from Dictyostelium discoideum (Social amoeba).